The primary structure comprises 715 residues: Serine/arginine repetitive matrix protein 5 (715 aa).

The span at Met1–Ser13 shows a compositional bias: low complexity. Residues Met1–Ala715 are disordered. Polar residues predominate over residues Leu32 to Pro59. A compositionally biased stretch (low complexity) spans Ser60–Ser79. The span at Ser80–Thr90 shows a compositional bias: basic residues. A compositionally biased stretch (polar residues) spans Ser92–Ser104. Over residues His112–Pro136 the composition is skewed to basic residues. Composition is skewed to polar residues over residues Thr213–Gly224 and Tyr257–Ala272. Low complexity predominate over residues Ser273–Arg285. Over residues Ser286 to Lys320 the composition is skewed to basic residues. Basic and acidic residues-rich tracts occupy residues Pro359–Gly388 and Lys397–His521. Basic residues predominate over residues Arg522–Ser536. Basic and acidic residues-rich tracts occupy residues Pro539–Arg595 and Ser611–Asn628. Over residues Thr657–Arg666 the composition is skewed to polar residues. The segment covering Thr667–Ser681 has biased composition (low complexity). The segment covering Gly682–Ala715 has biased composition (polar residues).

This is Serine/arginine repetitive matrix protein 5 (SRRM5) from Homo sapiens (Human).